A 21-amino-acid polypeptide reads, in one-letter code: Fibrinogen beta chain (21 aa).

A Pyrrolidone carboxylic acid modification is found at Q1. Over residues 1–10 (QFPTDYDEGQ) the composition is skewed to acidic residues. The interval 1–21 (QFPTDYDEGQDDRPKLGLGAR) is disordered. An O-linked (GalNAc...) threonine glycan is attached at T4. Residue Y6 is modified to Sulfotyrosine.

Heterohexamer; disulfide linked. Contains 2 sets of 3 non-identical chains (alpha, beta and gamma). The 2 heterotrimers are in head to head conformation with the N-termini in a small central domain. Conversion of fibrinogen to fibrin is triggered by thrombin, which cleaves fibrinopeptides A and B from alpha and beta chains, and thus exposes the N-terminal polymerization sites responsible for the formation of the soft clot.

It localises to the secreted. Functionally, cleaved by the protease thrombin to yield monomers which, together with fibrinogen alpha (FGA) and fibrinogen gamma (FGG), polymerize to form an insoluble fibrin matrix. Fibrin has a major function in hemostasis as one of the primary components of blood clots. In addition, functions during the early stages of wound repair to stabilize the lesion and guide cell migration during re-epithelialization. Was originally thought to be essential for platelet aggregation, based on in vitro studies using anticoagulated blood. However subsequent studies have shown that it is not absolutely required for thrombus formation in vivo. Enhances expression of SELP in activated platelets. Maternal fibrinogen is essential for successful pregnancy. Fibrin deposition is also associated with infection, where it protects against IFNG-mediated hemorrhage. May also facilitate the antibacterial immune response via both innate and T-cell mediated pathways. This chain is Fibrinogen beta chain (FGB), found in Bubalus bubalis (Domestic water buffalo).